The following is a 116-amino-acid chain: MHEITLCQRALELIEQQAAKHGAKRVTGVWLKIGAFSCVETSSLAFCFDLVCRGSVAEGCKLHLEEQEAECWCETCQQYVTLLTQRVRRCPLCHGDMLQIVADDGLQIRRIEIDQE.

Ni(2+) is bound at residue His2. Residues Cys73, Cys76, Cys90, and Cys93 each coordinate Zn(2+).

The protein belongs to the HypA/HybF family.

Its function is as follows. Involved in the maturation of [NiFe] hydrogenases. Required for nickel insertion into the metal center of the hydrogenase. This chain is Hydrogenase maturation factor HypA, found in Escherichia coli O6:H1 (strain CFT073 / ATCC 700928 / UPEC).